The sequence spans 338 residues: Lipoate-protein ligase A (338 aa).

The BPL/LPL catalytic domain occupies 29–216 (PATQRVLFLW…AFFAHYGEHV (188 aa)). Residues Arg-71, 76–79 (GAVF), and Lys-134 contribute to the ATP site. Residue Lys-134 coordinates (R)-lipoate.

It belongs to the LplA family. In terms of assembly, monomer.

It localises to the cytoplasm. The enzyme catalyses L-lysyl-[lipoyl-carrier protein] + (R)-lipoate + ATP = N(6)-[(R)-lipoyl]-L-lysyl-[lipoyl-carrier protein] + AMP + diphosphate + H(+). Its pathway is protein modification; protein lipoylation via exogenous pathway; protein N(6)-(lipoyl)lysine from lipoate: step 1/2. The protein operates within protein modification; protein lipoylation via exogenous pathway; protein N(6)-(lipoyl)lysine from lipoate: step 2/2. Its function is as follows. Catalyzes both the ATP-dependent activation of exogenously supplied lipoate to lipoyl-AMP and the transfer of the activated lipoyl onto the lipoyl domains of lipoate-dependent enzymes. This is Lipoate-protein ligase A from Escherichia coli O17:K52:H18 (strain UMN026 / ExPEC).